A 425-amino-acid polypeptide reads, in one-letter code: Pre-mRNA-splicing factor PRP46 (425 aa).

7 WD repeats span residues Gly-111–Thr-151, Gly-154–Asp-193, Gly-196–Thr-235, Gly-238–Thr-279, His-281–Asn-320, Glu-322–Lys-360, and Glu-371–Ser-410.

The protein belongs to the WD repeat PRL1/PRL2 family. Associated with the spliceosome.

The protein resides in the cytoplasm. It localises to the nucleus. Involved in pre-mRNA splicing and required for cell cycle progression at G2/M. The protein is Pre-mRNA-splicing factor PRP46 (PRP46) of Eremothecium gossypii (strain ATCC 10895 / CBS 109.51 / FGSC 9923 / NRRL Y-1056) (Yeast).